A 203-amino-acid polypeptide reads, in one-letter code: Outer-membrane lipoprotein carrier protein (203 aa).

The first 21 residues, 1–21 (MKKLLVACCLLSGFASTSVLA), serve as a signal peptide directing secretion.

It belongs to the LolA family. In terms of assembly, monomer.

It is found in the periplasm. Its function is as follows. Participates in the translocation of lipoproteins from the inner membrane to the outer membrane. Only forms a complex with a lipoprotein if the residue after the N-terminal Cys is not an aspartate (The Asp acts as a targeting signal to indicate that the lipoprotein should stay in the inner membrane). This chain is Outer-membrane lipoprotein carrier protein, found in Serratia proteamaculans (strain 568).